The sequence spans 2715 residues: MDVKERRPYCSLTKSRREKERRYTNSSADNEECRVPTQKSYSSSETLKAFDHDYSRLLYGNRVKDLVHREADEYTRQGQNFTLRQLGVCESATRRGVAFCAEMGLPHRGYSISAGSDADTENEAVMSPEHAMRLWGRGVKSGRSSCLSSRSNSALTLTDTEHENRSDSESEQPSNNPGQPTLQPLPPSHKQHPAQHHPSITSLNRNSLTNRRNQSPAPPAALPAELQTTPESVQLQDSWVLGSNVPLESRHFLFKTGTGTTPLFSTATPGYTMASGSVYSPPTRPLPRNTLSRSAFKFKKSSKYCSWRCTALCAVGVSVLLAILLSYFIAMHLFGLNWHLQQTENDTFENGKVNSDTVPTNTVSLPSGDNGKLGGFTHENNTIDSGELDIGRRAIQEVPPGIFWRSQLFIDQPQFLKFNISLQKDALIGVYGRKGLPPSHTQYDFVELLDGSRLIAREQRNLVESERAGRQARSVSLHEAGFIQYLDSGIWHLAFYNDGKNPEQVSFNTIVIESVVECPRNCHGNGECVSGTCHCFPGFLGPDCSRAACPVLCSGNGQYSKGRCLCFSGWKGTECDVPTTQCIDPQCGGRGICIMGSCACNSGYKGENCEEADCLDPGCSNHGVCIHGECHCNPGWGGSNCEILKTMCADQCSGHGTYLQESGSCTCDPNWTGPDCSNEICSVDCGSHGVCMGGSCRCEEGWTGPACNQRACHPRCAEHGTCKDGKCECSQGWNGEHCTIAHYLDKIVKEGCPGLCNSNGRCTLDQNGWHCVCQPGWRGAGCDVAMETLCTDSKDNEGDGLIDCMDPDCCLQSSCQNQPYCRGLPDPQDIISQSLQTPSQQAAKSFYDRISFLIGSDSTHVLPGESPFNKSLASVIRGQVLTADGTPLIGVNVSFLHYSEYGYTITRQDGMFDLVANGGASLTLVFERSPFLTQYHTVWIPWNVFYVMDTLVMKKEENDIPSCDLSGFVRPSPIIVSSPLSTFFRSSPEDSPIIPETQVLHEETTIPGTDLKLSYLSSRAAGYKSVLKITMTQAVIPFNLMKVHLMVAVVGRLFQKWFPASPNLAYTFIWDKTDAYNQKVYGLSEAVVSVGYEYESCLDLTLWEKRTAVLQGYELDASNMGGWTLDKHHVLDVQNGILYKGNGENQFISQQPPVVSSIMGNGRRRSISCPSCNGQADGNKLLAPVALACGIDGSLYVGDFNYVRRIFPSGNVTSVLELRNKDFRHSSNPAHRYYLATDPVTGDLYVSDTNTRRIYRPKSLTGAKDLTKNAEVVAGTGEQCLPFDEARCGDGGKAVEATLMSPKGMAIDKNGLIYFVDGTMIRKVDQNGIISTLLGSNDLTSARPLTCDTSMHISQVRLEWPTDLAINPMDNSIYVLDNNVVLQITENRQVRIAAGRPMHCQVPGVEYPVGKHAVQTTLESATAIAVSYSGVLYITETDEKKINRIRQVTTDGEISLVAGIPSECDCKNDANCDCYQSGDGYAKDAKLNAPSSLAASPDGTLYIADLGNIRIRAVSKNKPLLNSMNFYEVASPTDQELYIFDINGTHQYTVSLVTGDYLYNFSYSNDNDVTAVTDSNGNTLRIRRDPNRMPVRVVSPDNQVIWLTIGTNGCLKSMTAQGLELVLFTYHGNSGLLATKSDETGWTTFFDYDSEGRLTNVTFPTGVVTNLHGDMDKAITVDIESSSREEDVSITSNLSSIDSFYTMVQDQLRNSYQIGYDGSLRIFYASGLDSHYQTEPHVLAGTANPTVAKRNMTLPGENGQNLVEWRFRKEQAQGKVNVFGRKLRVNGRNLLSVDFDRTTKTEKIYDDHRKFLLRIAYDTSGHPTLWLPSSKLMAVNVTYSSTGQIASIQRGTTSEKVDYDSQGRIVSRVFADGKTWSYTYLEKSMVLLLHSQRQYIFEYDMWDRLSAITMPSVARHTMQTIRSIGYYRNIYNPPESNASIITDYNEEGLLLQTAFLGTSRRVLFKYRRQTRLSEILYDSTRVSFTYDETAGVLKTVNLQSDGFICTIRYRQIGPLIDRQIFRFSEDGMVNARFDYSYDNSFRVTSMQGVINETPLPIDLYQFDDISGKVEQFGKFGVIYYDINQIISTAVMTYTKHFDAHGRIKEIQYEIFRSLMYWITIQYDNMGRVTKREIKIGPFANTTKYAYEYDVDGQLQTVYLNEKIMWRYNYDLNGNLHLLNPSSSARLTPLRYDLRDRITRLGDVQYRLDEDGFLRQRGTEIFEYSSKGLLTRVYSKGSGWTVIYRYDGLGRRVSSKTSLGQHLQFFYADLTYPTRITHVYNHSSSEITSLYYDLQGHLFAMEISSGDEFYIASDNTGTPLAVFSSNGLMLKQTQYTAYGEIYFDSNVDFQLVIGFHGGLYDPLTKLIHFGERDYDILAGRWTTPDIEIWKRIGKDPAPFNLYMFRNNNPASKIHDVKDYITDVNSWLVTFGFHLHNAIPGFPVPKFDLTEPSYELVKSQQWEDVPPIFGVQQQVARQAKAFLSLGKMAEVQVSRRKAGAEQSWLWFATVKSLIGKGVMLAVSQGRVQTNVLNIANEDCIKVAAVLNNAFYLENLHFTIEGKDTHYFIKTTTPESDLGTLRLTSGRKALENGINVTVSQSTTVVNGRTRRFADVEMQFGALALHVRYGMTLDEEKARILEQARQRALARAWAREQQRVRDGEEGARLWTEGEKRQLLSAGKVQGYDGYYVLSVEQYPELADSANNIQFLRQSEIGKR.

Disordered stretches follow at residues 1–38 (MDVKERRPYCSLTKSRREKERRYTNSSADNEECRVPTQ) and 142–223 (GRSS…AALP). Residues 1-309 (MDVKERRPYC…KSSKYCSWRC (309 aa)) enclose the Teneurin N-terminal domain. At 1–310 (MDVKERRPYC…SSKYCSWRCT (310 aa)) the chain is on the cytoplasmic side. A compositionally biased stretch (low complexity) spans 142 to 153 (GRSSCLSSRSNS). The segment covering 159–168 (DTEHENRSDS) has biased composition (basic and acidic residues). The span at 171–182 (EQPSNNPGQPTL) shows a compositional bias: polar residues. Low complexity predominate over residues 201-213 (TSLNRNSLTNRRN). A helical membrane pass occupies residues 311–331 (ALCAVGVSVLLAILLSYFIAM). Over 332–2715 (HLFGLNWHLQ…FLRQSEIGKR (2384 aa)) the chain is Extracellular. N345, N380, and N419 each carry an N-linked (GlcNAc...) asparagine glycan. EGF-like domains follow at residues 514-545 (SVVECPRNCHGNGECVSGTCHCFPGFLGPDCS), 546-576 (RAACPVLCSGNGQYSKGRCLCFSGWKGTECD), 578-610 (PTTQCIDPQCGGRGICIMGSCACNSGYKGENCE), 611-642 (EADCLDPGCSNHGVCIHGECHCNPGWGGSNCE), 644-677 (LKTMCADQCSGHGTYLQESGSCTCDPNWTGPDCS), 678-709 (NEICSVDCGSHGVCMGGSCRCEEGWTGPACNQ), 710-739 (RACHPRCAEHGTCKDGKCECSQGWNGEHCT), and 740-783 (IAHY…AGCD). 22 disulfide bridges follow: C518-C528, C522-C533, C535-C544, C553-C564, C566-C575, C582-C593, C587-C598, C600-C609, C614-C625, C619-C630, C632-C641, C652-C665, C667-C676, C681-C691, C685-C696, C698-C707, C712-C722, C716-C727, C729-C738, C752-C762, C756-C771, and C773-C782. A glycan (N-linked (GlcNAc...) asparagine) is linked at N670. 2 N-linked (GlcNAc...) asparagine glycosylation sites follow: N869 and N892. One copy of the NHL 1 repeat lies at 1181–1209 (LLAPVALACGIDGSLYVGDFNYVRRIFPS). A glycan (N-linked (GlcNAc...) asparagine) is linked at N1211. NHL repeat units follow at residues 1216–1260 (LELR…PKSL), 1286–1330 (ARCG…NGII), 1347–1387 (CDTS…ITEN), 1418–1445 (LESATAIAVSYSGVLYITETDEKKINRI), and 1474–1517 (CYQS…VSKN). The stretch at 1527 to 1546 (YEVASPTDQELYIFDINGTH) is one YD 1 repeat. N1543 and N1560 each carry an N-linked (GlcNAc...) asparagine glycan. 3 YD repeats span residues 1563-1583 (YSNDNDVTAVTDSNGNTLRIR), 1626-1645 (YHGNSGLLATKSDETGWTTF), and 1646-1668 (FDYDSEGRLTNVTFPTGVVTNLH). N-linked (GlcNAc...) asparagine glycans are attached at residues N1656, N1693, N1751, and N1836. YD repeat units lie at residues 1839–1858 (YSSTGQIASIQRGTTSEKVD), 1880–1898 (YLEKSMVLLLHSQRQYIFE), 1899–1919 (YDMWDRLSAITMPSVARHTMQ), 1926–1943 (YYRNIYNPPESNASIITD), 1944–1965 (YNEEGLLLQTAFLGTSRRVLFK), 1966–1983 (YRRQTRLSEILYDSTRVS), 1986–2006 (YDETAGVLKTVNLQSDGFICT), 2009–2029 (YRQIGPLIDRQIFRFSEDGMV), 2037–2056 (YDNSFRVTSMQGVINETPLP), 2062–2079 (FDDISGKVEQFGKFGVIY), 2080–2106 (YDINQIISTAVMTYTKHFDAHGRIKEI), 2108–2121 (YEIFRSLMYWITIQ), 2122–2145 (YDNMGRVTKREIKIGPFANTTKYA), 2148–2168 (YDVDGQLQTVYLNEKIMWRYN), 2169–2189 (YDLNGNLHLLNPSSSARLTPL), 2191–2211 (YDLRDRITRLGDVQYRLDEDG), 2223–2243 (YSSKGLLTRVYSKGSGWTVIY), and 2245–2265 (YDGLGRRVSSKTSLGQHLQFF). N-linked (GlcNAc...) asparagine glycosylation is present at N1937. N-linked (GlcNAc...) asparagine glycosylation occurs at N2140. The N-linked (GlcNAc...) asparagine glycan is linked to N2280. The YD 23 repeat unit spans residues 2291 to 2332 (YDLQGHLFAMEISSGDEFYIASDNTGTPLAVFSSNGLMLKQT). N2592 carries an N-linked (GlcNAc...) asparagine glycan.

It belongs to the tenascin family. Teneurin subfamily. In terms of assembly, homodimer; disulfide-linked; to mediate homophilic cell adhesion. Most isoforms (isoform-type A and type-B) can mediate homophilic interaction. Heterodimer with either TENM1 or TENM2. May also form heterodimer with TENM4. Isoform A0B0: Does not form homodimer to mediate homophilic cell adhesion. Isoform A0B0: Heterodimer with ADGRL3. In brain, expressed in highly specific regions of the postnatal brain: expressed in restricted domains of the developing hippocampal region, including proximal CA1, distal subiculum, and medial entorhinal cortex (at protein level). Expression matches with topographic connectivity between entorhinal cortex, CA1, and subiculum (at protein level). Also specifically expressed in subregions of the presubiculum, parasubiculum, medial mammillary nucleus and anteroventral thalamic nucleus that are topographically connected with subiculum or entorhinal cortex (at protein level). Expressed in neurons of the developing visual pathway (at protein level). Expressed in the dorsal and ventral lateral geniculate nucleus (dLGN and vLGN) and optic tract at birth. Expressed in ipsilateral retinal axons of terminal zones (TZs) in the developing superior colliculus (SC) throughout the first postnatal week. Expressed in the layer V of the visual caudal cortex. Expressed in the femoral and mandibular condylar cartilages. Strongly expressed in fibrous and proliferating chondrocytes. Poorly expressed in mature chondrocytes. Not expressed in hypertrophic chondrocytes.

The protein localises to the cell membrane. It localises to the cell projection. It is found in the axon. Involved in neural development by regulating the establishment of proper connectivity within the nervous system. Acts in both pre- and postsynaptic neurons in the hippocampus to control the assembly of a precise topographic projection: required in both CA1 and subicular neurons for the precise targeting of proximal CA1 axons to distal subiculum, probably by promoting homophilic cell adhesion. Promotes homophilic adhesion in a splicing isoform-dependent manner: most isoforms (isoform-type A and type-B) can mediate homophilic interaction. Promotes axon guidance. Required for proper dendrite morphogenesis and axon targeting in the vertebrate visual system, thereby playing a key role in the development of the visual pathway. Regulates the formation in ipsilateral retinal mapping to both the dorsal lateral geniculate nucleus (dLGN) and the superior colliculus (SC). May also be involved in the differentiation of the fibroblast-like cells in the superficial layer of mandibular condylar cartilage into chondrocytes. This is Teneurin-3 from Mus musculus (Mouse).